The sequence spans 345 residues: Protein RecA (345 aa).

66-73 is an ATP binding site; that stretch reads GPESSGKT.

Belongs to the RecA family.

It is found in the cytoplasm. Its function is as follows. Can catalyze the hydrolysis of ATP in the presence of single-stranded DNA, the ATP-dependent uptake of single-stranded DNA by duplex DNA, and the ATP-dependent hybridization of homologous single-stranded DNAs. It interacts with LexA causing its activation and leading to its autocatalytic cleavage. This chain is Protein RecA, found in Acidithiobacillus ferrooxidans (strain ATCC 23270 / DSM 14882 / CIP 104768 / NCIMB 8455) (Ferrobacillus ferrooxidans (strain ATCC 23270)).